A 425-amino-acid chain; its full sequence is MSPAFRTMDVEPRTKGILLEPFVHQVGGHSCVLRFNETTLCKPLVPREHQFYETLPAEMRRFTPQYKGVVSVRFEEDEDRNLCLIAYPLKGDHGPVDIVDNSDCEPKSKLLRWTNKKHHVLETEKSPKDWVRQHRKEEKMKSHKLEEEFEWLKKSEVLYYSVEKKGTVSSQLKHYNPWSMKCHQQQLQRMKENAKHRNQYKFILLENLTCRYEVPCVLDLKMGTRQHGDDASEEKAANQIRKCQQSTSAVIGVRVCGMQVYQAGTGQLMFMNKYHGRKLSVQGFKEALFQFFHNGRYLRRELLGPVLKKLTELKAVLERQESYRFYSSSLLVIYDGKEWPEVTLDSDAEDLEDLSEESADESAGAYAYKPLGASSVDVRMIDFAHTTCRLYGEDSVVHEGQDAGYIFGLQSLIDIVTEISEESGE.

Residues 206 to 208 (ENL) and aspartate 219 each bind ATP. Substrate is bound by residues 215 to 223 (PCVLDLKMG), lysine 221, and 235 to 242 (KAANQIRK). Aspartate 382 lines the ATP pocket. A substrate-binding site is contributed by histidine 385.

The protein belongs to the inositol phosphokinase (IPK) family. In terms of tissue distribution, highly expressed in small intestine.

The protein resides in the nucleus. The catalysed reaction is 1D-myo-inositol hexakisphosphate + ATP = 5-diphospho-1D-myo-inositol 1,2,3,4,6-pentakisphosphate + ADP. It participates in phospholipid metabolism; phosphatidylinositol metabolism. Functionally, converts inositol hexakisphosphate (InsP6) to diphosphoinositol pentakisphosphate (InsP7/PP-InsP5). In Rattus norvegicus (Rat), this protein is Inositol hexakisphosphate kinase 2 (Ip6k2).